Consider the following 822-residue polypeptide: DNA gyrase subunit A (822 aa).

Positions 32-497 (LPDVRDGLKP…QVLSLEDEDL (466 aa)) constitute a Topo IIA-type catalytic domain. Tyr120 functions as the O-(5'-phospho-DNA)-tyrosine intermediate in the catalytic mechanism. The GyrA-box motif lies at 524–530 (QKRGGRG).

The protein belongs to the type II topoisomerase GyrA/ParC subunit family. As to quaternary structure, heterotetramer, composed of two GyrA and two GyrB chains. In the heterotetramer, GyrA contains the active site tyrosine that forms a transient covalent intermediate with DNA, while GyrB binds cofactors and catalyzes ATP hydrolysis.

Its subcellular location is the cytoplasm. The enzyme catalyses ATP-dependent breakage, passage and rejoining of double-stranded DNA.. Functionally, a type II topoisomerase that negatively supercoils closed circular double-stranded (ds) DNA in an ATP-dependent manner to modulate DNA topology and maintain chromosomes in an underwound state. Negative supercoiling favors strand separation, and DNA replication, transcription, recombination and repair, all of which involve strand separation. Also able to catalyze the interconversion of other topological isomers of dsDNA rings, including catenanes and knotted rings. Type II topoisomerases break and join 2 DNA strands simultaneously in an ATP-dependent manner. This is DNA gyrase subunit A from Streptococcus pneumoniae serotype 4 (strain ATCC BAA-334 / TIGR4).